Here is a 256-residue protein sequence, read N- to C-terminus: Triosephosphate isomerase (256 aa).

9 to 11 (NWK) lines the substrate pocket. The active-site Electrophile is the His-97. The Proton acceptor role is filled by Glu-169. Residues Gly-175, Ser-214, and 235 to 236 (GG) each bind substrate.

This sequence belongs to the triosephosphate isomerase family. Homodimer.

It localises to the cytoplasm. The catalysed reaction is D-glyceraldehyde 3-phosphate = dihydroxyacetone phosphate. Its pathway is carbohydrate biosynthesis; gluconeogenesis. It functions in the pathway carbohydrate degradation; glycolysis; D-glyceraldehyde 3-phosphate from glycerone phosphate: step 1/1. Functionally, involved in the gluconeogenesis. Catalyzes stereospecifically the conversion of dihydroxyacetone phosphate (DHAP) to D-glyceraldehyde-3-phosphate (G3P). This Vibrio vulnificus (strain CMCP6) protein is Triosephosphate isomerase.